Here is a 281-residue protein sequence, read N- to C-terminus: Pantothenate synthetase (281 aa).

30-37 (MGALHRGH) lines the ATP pocket. His37 serves as the catalytic Proton donor. Gln61 contacts (R)-pantoate. Gln61 contacts beta-alanine. ATP is bound at residue 147–150 (GEKD). Residue Gln153 coordinates (R)-pantoate. ATP is bound by residues Ile176 and 184 to 187 (LSSR).

The protein belongs to the pantothenate synthetase family. As to quaternary structure, homodimer.

The protein resides in the cytoplasm. It catalyses the reaction (R)-pantoate + beta-alanine + ATP = (R)-pantothenate + AMP + diphosphate + H(+). It functions in the pathway cofactor biosynthesis; (R)-pantothenate biosynthesis; (R)-pantothenate from (R)-pantoate and beta-alanine: step 1/1. Catalyzes the condensation of pantoate with beta-alanine in an ATP-dependent reaction via a pantoyl-adenylate intermediate. In Porphyromonas gingivalis (strain ATCC BAA-308 / W83), this protein is Pantothenate synthetase.